A 134-amino-acid chain; its full sequence is D-ribose pyranase (134 aa).

The active-site Proton donor is H20. Residues D28, H99, and 123 to 125 each bind substrate; that span reads YSN.

Belongs to the RbsD / FucU family. RbsD subfamily. Homodecamer.

The protein localises to the cytoplasm. It carries out the reaction beta-D-ribopyranose = beta-D-ribofuranose. It functions in the pathway carbohydrate metabolism; D-ribose degradation; D-ribose 5-phosphate from beta-D-ribopyranose: step 1/2. In terms of biological role, catalyzes the interconversion of beta-pyran and beta-furan forms of D-ribose. The sequence is that of D-ribose pyranase from Staphylococcus aureus (strain USA300).